The primary structure comprises 610 residues: Zinc metalloproteinase-disintegrin-like BITM06A (610 aa).

Residues 1-20 form the signal peptide; it reads MIQVLLVTICLAAFPYQGSS. The propeptide occupies 21-189; sequence IILESGNVND…KKASQLVVTA (169 aa). Residues 198-394 enclose the Peptidase M12B domain; the sequence is RYVELFIVVD…ENPQCILNEP (197 aa). Ca(2+)-binding residues include E201 and D285. 3 cysteine pairs are disulfide-bonded: C309–C389, C349–C373, and C351–C356. H334 serves as a coordination point for Zn(2+). E335 is an active-site residue. H338 and H344 together coordinate Zn(2+). N372 is a glycosylation site (N-linked (GlcNAc...) asparagine). Residues C389, N392, V404, N407, L409, E411, E414, and D417 each contribute to the Ca(2+) site. The Disintegrin domain occupies 402–488; it reads PPVCGNELLE…ECPADVFHKN (87 aa). 14 disulfide bridges follow: C405–C434, C416–C429, C418–C424, C428–C451, C442–C448, C447–C473, C460–C480, C467–C499, C492–C504, C511–C561, C526–C572, C539–C549, C556–C598, and C592–C603. Positions 466–468 match the D/ECD-tripeptide motif; it reads ECD. 5 residues coordinate Ca(2+): D468, P469, E471, D483, and V484.

The protein belongs to the venom metalloproteinase (M12B) family. P-III subfamily. P-IIIa sub-subfamily. As to quaternary structure, monomer. Zn(2+) serves as cofactor. Expressed by the venom gland.

It localises to the secreted. In terms of biological role, snake venom metalloproteinase that impairs hemostasis in the envenomed animal. The chain is Zinc metalloproteinase-disintegrin-like BITM06A from Bothrops insularis (Golden lancehead).